The following is a 484-amino-acid chain: MTLTVYNTLTRRKEPLETLETGKIRMYCCGITVYDYCHLGHARTCMVWDVVRRYLQWRGYEVQYIQNFTDIDDKILNRARQEGTTMEAVSDRFIEAYFEDMEHLHVQKADAYPRATHTLNGIKRLVSELEAKGYAYQSNGDVYYSVRHFKDYGKLSGRKLEDLQAGASGRVEVQDPEAAKKKDPFDFAVWKAAKPGEPSWDSPWGQGRPGWHIECSAMVRERLGETIDIHVGGSDLIFPHHENEIAQSEAATGKPLARYWLHNGMVKVEGEKMSKSLGNFITIRDLLDKVDPMAMRLFILQAHYRKPVDFTDEALEAATNGWHTLKEGLLFGYNHGKQLNFTASPPHPLTSSPLTQRFQQAVDDDFNFAGGLAILFEIAKELRKEGNILVHQGQTETSPQVLEEQWRTLVELAGVLGLETDISEVQEAVGNGLSDAEIEELIEQRKIARQNKNYAEGDRLRDELKNQGIILVDQPGGITTWHRS.

Cysteine 29 contributes to the Zn(2+) binding site. Residues 31–41 (ITVYDYCHLGH) carry the 'HIGH' region motif. Zn(2+) is bound by residues cysteine 215, histidine 240, and glutamate 244. Residues 272 to 276 (KMSKS) carry the 'KMSKS' region motif. Lysine 275 is an ATP binding site.

Belongs to the class-I aminoacyl-tRNA synthetase family. In terms of assembly, monomer. Requires Zn(2+) as cofactor.

It localises to the cytoplasm. It catalyses the reaction tRNA(Cys) + L-cysteine + ATP = L-cysteinyl-tRNA(Cys) + AMP + diphosphate. The protein is Cysteine--tRNA ligase of Rippkaea orientalis (strain PCC 8801 / RF-1) (Cyanothece sp. (strain PCC 8801)).